The following is a 215-amino-acid chain: 2-phospho-L-lactate guanylyltransferase (215 aa).

The protein belongs to the CofC family. As to quaternary structure, homodimer.

The enzyme catalyses (2S)-2-phospholactate + GTP + H(+) = (2S)-lactyl-2-diphospho-5'-guanosine + diphosphate. It participates in cofactor biosynthesis; coenzyme F420 biosynthesis. Guanylyltransferase that catalyzes the activation of (2S)-2-phospholactate (2-PL) as (2S)-lactyl-2-diphospho-5'-guanosine, via the condensation of 2-PL with GTP. It is involved in the biosynthesis of coenzyme F420, a hydride carrier cofactor. The polypeptide is 2-phospho-L-lactate guanylyltransferase (Methanococcoides burtonii (strain DSM 6242 / NBRC 107633 / OCM 468 / ACE-M)).